The following is a 109-amino-acid chain: Large ribosomal subunit protein uL22 (109 aa).

The protein belongs to the universal ribosomal protein uL22 family. As to quaternary structure, part of the 50S ribosomal subunit.

Functionally, this protein binds specifically to 23S rRNA; its binding is stimulated by other ribosomal proteins, e.g. L4, L17, and L20. It is important during the early stages of 50S assembly. It makes multiple contacts with different domains of the 23S rRNA in the assembled 50S subunit and ribosome. The globular domain of the protein is located near the polypeptide exit tunnel on the outside of the subunit, while an extended beta-hairpin is found that lines the wall of the exit tunnel in the center of the 70S ribosome. The chain is Large ribosomal subunit protein uL22 from Laribacter hongkongensis (strain HLHK9).